We begin with the raw amino-acid sequence, 1190 residues long: JNK-interacting protein (1190 aa).

Positions 1 to 35 (MACNLSPVNEMADSITSSTPSEIVYGGPGSPDEHR) are disordered. Residues 24–112 (VYGGPGSPDE…QTQYEREKAL (89 aa)) enclose the RH1 domain. Residues 78–165 (LDLAYLERDE…TDHASRLEER (88 aa)) are a coiled coil. The disordered stretch occupies residues 263–364 (DEFSSDIEPS…DDTSDDGSLG (102 aa)). Residues 277 to 292 (PQSSADALTSPITTKE) are compositionally biased toward polar residues. The stretch at 383 to 491 (KNALNIVKND…EESIKWTEMQ (109 aa)) forms a coiled coil. Residues 456 to 542 (RKRFTRSEMQ…RASSSRGKMT (87 aa)) enclose the RH2 domain. The tract at residues 775–829 (EDGVPTYCSNDMKPSPKRTRDFSISEVAPVDSSAPVKEDPLPPPANRPGGRAALP) is disordered.

It belongs to the JIP scaffold family. Expressed in neurons of the ventral cord, retrovesicular and preanal ganglia and nerve ring, intestinal cells, seam and hypodermal cells, body wall, head muscle and pharynx.

Its subcellular location is the cytoplasm. The protein resides in the perinuclear region. In terms of biological role, the JNK-interacting protein (JIP) group of scaffold proteins selectively mediates JNK signaling by aggregating specific components of the MAPK cascade to form a functional JNK signaling module. May function as a regulator of synaptic vesicle transport, through interactions with the JNK-signaling components and motor proteins. Binds specific components of the JNK signaling pathway namely jnk-1, jkk-1 and sek-1. Associates with components of the motor protein, kinesin-1. Pre-assembled unc-16 scaffolding complexes are then transported as a cargo of kinesin, to the required subcellular location. Regulates the retrograde transport of autophagosomes from the neurites to the cell body of AIY interneurons. This chain is JNK-interacting protein, found in Caenorhabditis elegans.